The sequence spans 107 residues: Iron-binding protein IscA (107 aa).

Positions 35, 99, and 101 each coordinate Fe cation.

It belongs to the HesB/IscA family. In terms of assembly, homodimer; may form tetramers and higher multimers. Fe cation is required as a cofactor.

Is able to transfer iron-sulfur clusters to apo-ferredoxin. Multiple cycles of [2Fe2S] cluster formation and transfer are observed, suggesting that IscA acts catalytically. Recruits intracellular free iron so as to provide iron for the assembly of transient iron-sulfur cluster in IscU in the presence of IscS, L-cysteine and the thioredoxin reductase system TrxA/TrxB. The protein is Iron-binding protein IscA of Enterobacter sp. (strain 638).